The sequence spans 309 residues: tRNA pseudouridine synthase B (309 aa).

The active-site Nucleophile is the Asp39. One can recognise a PUA domain in the interval 229–306 (LPRVVVHQES…ERVLTLRKVF (78 aa)).

This sequence belongs to the pseudouridine synthase TruB family. Type 1 subfamily.

It carries out the reaction uridine(55) in tRNA = pseudouridine(55) in tRNA. Functionally, responsible for synthesis of pseudouridine from uracil-55 in the psi GC loop of transfer RNAs. The protein is tRNA pseudouridine synthase B of Thermotoga maritima (strain ATCC 43589 / DSM 3109 / JCM 10099 / NBRC 100826 / MSB8).